Consider the following 326-residue polypeptide: Protein BugT (326 aa).

Residues 1–25 form the signal peptide; sequence MNMTRLLAVIGIFIATAGIAAPVSA.

It belongs to the UPF0065 (bug) family.

It is found in the periplasm. This is Protein BugT (bugT) from Bordetella pertussis (strain Tohama I / ATCC BAA-589 / NCTC 13251).